A 320-amino-acid polypeptide reads, in one-letter code: MKILLANPRGFCAGVSRAVETVEKVLEVEKSPVYVRHEVVHNKVVVDSLKKKGVVFVKEVDEVPDDAVCIFSAHGVSLKVEEAAAKKNLVLYDATCPLVTKVHRGVRLASNNDAECILIGHKGHPEVQGTMGQYRSKKGAIYLIESEEDLNKLTIKDPDNLYYATQTTLSVDETQGIIQALKDKYPNIKGPKKEDICYATQNRQTAIKAMLKHIDVLVVVGSQNSSNSNRLKELATLAGIDAYLVDNPKDVDKLWFDNKKVCGVSAGASAPEYLVQQIISQISKVCSTEVEVEEFEGIKEEVYFPLPRLLKQKIGTGKVE.

Cys12 is a binding site for [4Fe-4S] cluster. His41 and His74 together coordinate (2E)-4-hydroxy-3-methylbut-2-enyl diphosphate. Dimethylallyl diphosphate-binding residues include His41 and His74. Isopentenyl diphosphate is bound by residues His41 and His74. Residue Cys96 participates in [4Fe-4S] cluster binding. (2E)-4-hydroxy-3-methylbut-2-enyl diphosphate is bound at residue His124. His124 is a dimethylallyl diphosphate binding site. Residue His124 participates in isopentenyl diphosphate binding. The active-site Proton donor is Glu126. Thr167 contributes to the (2E)-4-hydroxy-3-methylbut-2-enyl diphosphate binding site. Residue Cys197 participates in [4Fe-4S] cluster binding. Ser225, Ser226, Asn227, and Ser269 together coordinate (2E)-4-hydroxy-3-methylbut-2-enyl diphosphate. Positions 225, 226, 227, and 269 each coordinate dimethylallyl diphosphate. Isopentenyl diphosphate-binding residues include Ser225, Ser226, Asn227, and Ser269.

Belongs to the IspH family. The cofactor is [4Fe-4S] cluster.

It catalyses the reaction isopentenyl diphosphate + 2 oxidized [2Fe-2S]-[ferredoxin] + H2O = (2E)-4-hydroxy-3-methylbut-2-enyl diphosphate + 2 reduced [2Fe-2S]-[ferredoxin] + 2 H(+). It carries out the reaction dimethylallyl diphosphate + 2 oxidized [2Fe-2S]-[ferredoxin] + H2O = (2E)-4-hydroxy-3-methylbut-2-enyl diphosphate + 2 reduced [2Fe-2S]-[ferredoxin] + 2 H(+). Its pathway is isoprenoid biosynthesis; dimethylallyl diphosphate biosynthesis; dimethylallyl diphosphate from (2E)-4-hydroxy-3-methylbutenyl diphosphate: step 1/1. It participates in isoprenoid biosynthesis; isopentenyl diphosphate biosynthesis via DXP pathway; isopentenyl diphosphate from 1-deoxy-D-xylulose 5-phosphate: step 6/6. Catalyzes the conversion of 1-hydroxy-2-methyl-2-(E)-butenyl 4-diphosphate (HMBPP) into a mixture of isopentenyl diphosphate (IPP) and dimethylallyl diphosphate (DMAPP). Acts in the terminal step of the DOXP/MEP pathway for isoprenoid precursor biosynthesis. In Francisella tularensis subsp. novicida (strain U112), this protein is 4-hydroxy-3-methylbut-2-enyl diphosphate reductase.